We begin with the raw amino-acid sequence, 480 residues long: Argininosuccinate lyase (480 aa).

The tract at residues 1–20 (MTQQDGGQAGQAEPTKLWGG) is disordered.

It belongs to the lyase 1 family. Argininosuccinate lyase subfamily.

It localises to the cytoplasm. The catalysed reaction is 2-(N(omega)-L-arginino)succinate = fumarate + L-arginine. It participates in amino-acid biosynthesis; L-arginine biosynthesis; L-arginine from L-ornithine and carbamoyl phosphate: step 3/3. The protein is Argininosuccinate lyase of Saccharopolyspora erythraea (strain ATCC 11635 / DSM 40517 / JCM 4748 / NBRC 13426 / NCIMB 8594 / NRRL 2338).